Reading from the N-terminus, the 359-residue chain is Holliday junction branch migration complex subunit RuvB (359 aa).

A large ATPase domain (RuvB-L) region spans residues Met1 to Tyr187. Residues Leu26, Arg27, Gly68, Lys71, Thr72, Thr73, Glu134–Tyr136, Arg177, Tyr187, and Arg224 each bind ATP. Thr72 contacts Mg(2+). Residues Glu188–Asp257 are small ATPAse domain (RuvB-S). Residues Pro260 to Leu359 form a head domain (RuvB-H) region. DNA is bound by residues Arg315 and Arg320.

Belongs to the RuvB family. As to quaternary structure, homohexamer. Forms an RuvA(8)-RuvB(12)-Holliday junction (HJ) complex. HJ DNA is sandwiched between 2 RuvA tetramers; dsDNA enters through RuvA and exits via RuvB. An RuvB hexamer assembles on each DNA strand where it exits the tetramer. Each RuvB hexamer is contacted by two RuvA subunits (via domain III) on 2 adjacent RuvB subunits; this complex drives branch migration. In the full resolvosome a probable DNA-RuvA(4)-RuvB(12)-RuvC(2) complex forms which resolves the HJ.

It is found in the cytoplasm. It catalyses the reaction ATP + H2O = ADP + phosphate + H(+). Functionally, the RuvA-RuvB-RuvC complex processes Holliday junction (HJ) DNA during genetic recombination and DNA repair, while the RuvA-RuvB complex plays an important role in the rescue of blocked DNA replication forks via replication fork reversal (RFR). RuvA specifically binds to HJ cruciform DNA, conferring on it an open structure. The RuvB hexamer acts as an ATP-dependent pump, pulling dsDNA into and through the RuvAB complex. RuvB forms 2 homohexamers on either side of HJ DNA bound by 1 or 2 RuvA tetramers; 4 subunits per hexamer contact DNA at a time. Coordinated motions by a converter formed by DNA-disengaged RuvB subunits stimulates ATP hydrolysis and nucleotide exchange. Immobilization of the converter enables RuvB to convert the ATP-contained energy into a lever motion, pulling 2 nucleotides of DNA out of the RuvA tetramer per ATP hydrolyzed, thus driving DNA branch migration. The RuvB motors rotate together with the DNA substrate, which together with the progressing nucleotide cycle form the mechanistic basis for DNA recombination by continuous HJ branch migration. Branch migration allows RuvC to scan DNA until it finds its consensus sequence, where it cleaves and resolves cruciform DNA. This is Holliday junction branch migration complex subunit RuvB from Clavibacter michiganensis subsp. michiganensis (strain NCPPB 382).